Here is a 426-residue protein sequence, read N- to C-terminus: Enolase (426 aa).

Residue Gln163 participates in (2R)-2-phosphoglycerate binding. The Proton donor role is filled by Glu205. Positions 242, 283, and 310 each coordinate Mg(2+). Lys335, Arg364, Ser365, and Lys386 together coordinate (2R)-2-phosphoglycerate. Lys335 (proton acceptor) is an active-site residue.

The protein belongs to the enolase family. The cofactor is Mg(2+).

The protein resides in the cytoplasm. It is found in the secreted. The protein localises to the cell surface. The enzyme catalyses (2R)-2-phosphoglycerate = phosphoenolpyruvate + H2O. Its pathway is carbohydrate degradation; glycolysis; pyruvate from D-glyceraldehyde 3-phosphate: step 4/5. In terms of biological role, catalyzes the reversible conversion of 2-phosphoglycerate (2-PG) into phosphoenolpyruvate (PEP). It is essential for the degradation of carbohydrates via glycolysis. The chain is Enolase from Clavibacter sepedonicus (Clavibacter michiganensis subsp. sepedonicus).